The chain runs to 569 residues: ATP-dependent RNA helicase HAS1 (569 aa).

2 disordered regions span residues 1–57 (MSKG…DQNF) and 71–110 (FKEE…FEDL). Residues 34–45 (EEEISSDEEEAD) are compositionally biased toward acidic residues. Residues 71–85 (FKEEKKQKKNKEPKT) show a composition bias toward basic and acidic residues. Residues 105–133 (DKFEDLGLSEPTMRAIKDMGFEKMTKVQE) carry the Q motif motif. Residues 136–312 (IPPLLAGRDV…RISLRAGPLY (177 aa)) form the Helicase ATP-binding domain. Position 149–156 (149–156 (AKTGSGKT)) interacts with ATP. The short motif at 259 to 262 (DEAD) is the DEAD box element. A Helicase C-terminal domain is found at 326–496 (GLEQGYVTCD…NIQSQLTKLI (171 aa)).

Belongs to the DEAD box helicase family. DDX18/HAS1 subfamily. As to quaternary structure, associates in the nucleolus with the 60S and pre-60S ribosomal subunits.

Its subcellular location is the nucleus. The protein resides in the nucleolus. It carries out the reaction ATP + H2O = ADP + phosphate + H(+). ATP-dependent RNA helicase involved in 40S ribosomal subunit biogenesis. Required for the processing and cleavage of 35S pre-rRNA at sites A0, A1, and A2, leading to mature 18S rRNA. In Meyerozyma guilliermondii (strain ATCC 6260 / CBS 566 / DSM 6381 / JCM 1539 / NBRC 10279 / NRRL Y-324) (Yeast), this protein is ATP-dependent RNA helicase HAS1 (HAS1).